A 34-amino-acid chain; its full sequence is uncharacterized protein (34 aa).

This is an uncharacterized protein from Acidianus two-tailed virus (ATV).